The primary structure comprises 198 residues: Na(+)-translocating NADH-quinone reductase subunit E (198 aa).

6 consecutive transmembrane segments (helical) span residues 11–31, 35–55, 77–97, 110–130, 140–160, and 176–196; these read SVFI…FLAV, VSTA…AVPV, FLNF…LEMV, GIFL…SFMV, VVYG…LAGI, and LGIT…FSGI.

It belongs to the NqrDE/RnfAE family. As to quaternary structure, composed of six subunits; NqrA, NqrB, NqrC, NqrD, NqrE and NqrF.

The protein resides in the cell inner membrane. The catalysed reaction is a ubiquinone + n Na(+)(in) + NADH + H(+) = a ubiquinol + n Na(+)(out) + NAD(+). NQR complex catalyzes the reduction of ubiquinone-1 to ubiquinol by two successive reactions, coupled with the transport of Na(+) ions from the cytoplasm to the periplasm. NqrA to NqrE are probably involved in the second step, the conversion of ubisemiquinone to ubiquinol. This chain is Na(+)-translocating NADH-quinone reductase subunit E, found in Pasteurella multocida (strain Pm70).